The following is a 2059-amino-acid chain: Desmoplakin-A (2059 aa).

Positions 1–11 (MSLSGSQTRLH) are enriched in polar residues. Residues 1–25 (MSLSGSQTRLHQISRRSSSRPDLTA) form a disordered region. 2 coiled-coil regions span residues 320-354 (IPQK…LLKN) and 397-453 (FKEA…VQTL). The segment at 665–690 (EVSSGKTATGVSSGKTATGVSSGKTS) is disordered. Residues 671–690 (TATGVSSGKTATGVSSGKTS) are compositionally biased toward low complexity. Coiled-coil stretches lie at residues 1062 to 1229 (MEEL…AELE) and 1261 to 1383 (LQQD…LQQR). Plectin repeat units follow at residues 1450–1488 (YLGG…TLEL), 1489–1526 (LEAQ…KDKL), 1564–1602 (LLEA…NEIL), 1666–1694 (IVDP…FLEL), 1847–1885 (LLEA…SVKL), and 1923–1961 (FLEF…AQKL). Residues 2008–2059 (KGISSPYNVSSGPSSRSGSRAGSRTGSRSGSRRGSVDYSSSSVSYTFFSSAS) form a disordered region. Positions 2011-2059 (SSPYNVSSGPSSRSGSRAGSRTGSRSGSRRGSVDYSSSSVSYTFFSSAS) are enriched in low complexity.

The protein belongs to the plakin or cytolinker family.

Its subcellular location is the cell junction. The protein localises to the desmosome. It localises to the cell membrane. In terms of biological role, involved in the organization of desmosome cell-cell junctions. Of particular importance in cell adhesion in the skin and during cardiac development. May also play a role in the regulation of Wnt, TGF-beta and Hippo signaling pathways. The protein is Desmoplakin-A of Danio rerio (Zebrafish).